The sequence spans 387 residues: 1,3-propanediol dehydrogenase (387 aa).

It belongs to the iron-containing alcohol dehydrogenase family. Homooctamer. Fe cation is required as a cofactor.

The enzyme catalyses propane-1,3-diol + NAD(+) = 3-hydroxypropanal + NADH + H(+). Its activity is regulated as follows. Inhibited by the metal chelator 1,10-phenanthroline. Its function is as follows. Catalyzes the reduction of 3-hydroxypropanal. Is considerably less active with glyceraldehyde, propionaldehyde, acetaldehyde, and butyraldehyde. Also catalyzes the oxidation of various primary, secondary, and tertiary alcohols. Is most active with substrates containing two primary alcohol groups separated by one or two carbon atoms. 1,3-propanediol is the preferred substrate. The polypeptide is 1,3-propanediol dehydrogenase (Citrobacter freundii).